We begin with the raw amino-acid sequence, 402 residues long: MSSSSFSIENVRSQFPALEKRQIFGDNAGGSQVLGTVAKRQLSPITEYLIETNVQLGASYKTSTQSTAIFDNAYKAAAKYINAGIDEIVIGASTTQVFRNLAAALKLQPGDELILTNVDHESNIDPWLHYAALNNATIKWWTPSDLNNPKLDPEQLRSLLTNKTRLVACTHCSNILGTINNIKAIADVVHEIPGALLAVDGVAYAPHRAIDVKELGADFYAFSWYKVYGPHISLLYGSKAAQAQLSSLGHFFNPDGSLMDKLELAAASYELTQAIIPLTAYFGENPKQTWDAIAEHEQKLQTRLIEYLVSKPQITVYGETSTDKAVRVPTVSFTVEGMSSQSVVEAVEAVSHAGIRWGHFFSKRLVGSILGLSDDGVVRVSLVHYNTVEEVDQIIVALEMVL.

Residues 137–138, D218, and 282–283 contribute to the pyridoxal 5'-phosphate site; these read TI and FG.

It belongs to the class-V pyridoxal-phosphate-dependent aminotransferase family. Csd subfamily.

In terms of biological role, aminotransferase-like protein; part of the Fg3_54/C64 gene cluster that mediates the biosynthesis of the octapeptide fusaoctaxin A, a virulence factor that is required for cell-to-cell invasiveness of plant host. The 2 nonribosomal peptide synthetases NRPS9 and NRPS5 form an assembly line which likely utilizes GABA as a starter unit (loaded on the unique module M1 of NRPS9) and sequentially incorporates seven extender units composed of the residues L-Ala, L-allo-Ile, L-Ser, L-Val, L-Ser, L-Leu and L-Leu, respectively. During the process, each of the residues that are tethered on modules M3-M7 of NRPS5 containing an E domain can undergo an epimerization reaction to produce a D-configuration before the transpeptidation reaction occurs. The elongation of the peptidyl chain might be terminated by module M8-mediated L-Leu incorporation, followed by R domain-catalyzed 4 electron reduction to release the resulting octapeptide from the assembly line as an alcohol. Fusaoctaxin A is cleaved by the cluster specific ABC transporter FGM5 to the pentapeptide fusapentaxin A and the tripeptide fusatrixin A. The other enzymes from the cluster, FGM1, FGM2, FGM3 and FGM9 seem not to be involved in the biosynthesis of fusaoctaxin A and their functions have still to be determined. This chain is Aminotransferase-like protein FGM3, found in Gibberella zeae (strain ATCC MYA-4620 / CBS 123657 / FGSC 9075 / NRRL 31084 / PH-1) (Wheat head blight fungus).